The sequence spans 409 residues: Bone morphogenetic protein 4 (409 aa).

The signal sequence occupies residues 1–19 (MIPGNRMLMVVLLCQVLLG). A propeptide spanning residues 20 to 293 (GASHASLIPE…ALTRRRRAKR (274 aa)) is cleaved from the precursor. Residue serine 91 is modified to Phosphoserine. A disordered region spans residues 91–110 (SGEEEEEEQMPSGGLEYPER). Asparagine 144, asparagine 209, asparagine 351, and asparagine 366 each carry an N-linked (GlcNAc...) asparagine glycan. 3 disulfide bridges follow: cysteine 309/cysteine 374, cysteine 338/cysteine 406, and cysteine 342/cysteine 408.

Belongs to the TGF-beta family. As to quaternary structure, homodimer; disulfide-linked. Interacts with GREM2. Part of a complex consisting of TWSG1 and CHRD. Interacts with the serine proteases, HTRA1 and HTRA3; the interaction with either inhibits BMP4-mediated signaling. The HTRA protease activity is required for this inhibition. Interacts with SOSTDC1. Interacts with FBN1 (via N-terminal domain) and FBN2. Interacts with type I receptor BMPR1A. Interacts with type II receptor BMPR2. Interacts with FSTL1; this interaction inhibits the activation of the BMP4/Smad1/5/8 signaling pathway. Interacts with SCUBE3. Interacts with TGFBR3.

The protein localises to the secreted. Its subcellular location is the extracellular space. It localises to the extracellular matrix. In terms of biological role, growth factor of the TGF-beta superfamily that plays essential roles in many developmental processes, including neurogenesis, vascular development, angiogenesis and osteogenesis. Acts in concert with PTHLH/PTHRP to stimulate ductal outgrowth during embryonic mammary development and to inhibit hair follicle induction. Initiates the canonical BMP signaling cascade by associating with type I receptor BMPR1A and type II receptor BMPR2. Once all three components are bound together in a complex at the cell surface, BMPR2 phosphorylates and activates BMPR1A. In turn, BMPR1A propagates signal by phosphorylating SMAD1/5/8 that travel to the nucleus and act as activators and repressors of transcription of target genes. Positively regulates the expression of odontogenic development regulator MSX1 via inducing the IPO7-mediated import of SMAD1 to the nucleus. Required for MSX1-mediated mesenchymal molar tooth bud development beyond the bud stage, via promoting Wnt signaling. Acts as a positive regulator of odontoblast differentiation during mesenchymal tooth germ formation, expression is repressed during the bell stage by MSX1-mediated inhibition of CTNNB1 signaling. Able to induce its own expression in dental mesenchymal cells and also in the neighboring dental epithelial cells via an MSX1-mediated pathway. Can also signal through non-canonical BMP pathways such as ERK/MAP kinase, PI3K/Akt, or SRC cascades. For example, induces SRC phosphorylation which, in turn, activates VEGFR2, leading to an angiogenic response. The protein is Bone morphogenetic protein 4 (BMP4) of Oryctolagus cuniculus (Rabbit).